The primary structure comprises 668 residues: SHC SH2 domain-binding protein 1 (668 aa).

N-acetylalanine is present on alanine 2. 3 positions are modified to phosphoserine: serine 31, serine 44, and serine 273. PbH1 repeat units follow at residues 428–451 (GMDV…LIIH), 452–473 (HGKT…TVRT), 474–496 (SAEL…EIYP), 497–518 (GSKC…LIKD), and 526–548 (IPKI…VLVK). Serine 630 bears the Phosphoserine mark.

As to quaternary structure, interacts directly with isoform p52shc of SHC1 via its SH2 domain. Interacts with TRIM71; leading to enhanced SHCBP1 protein stability. Interacts with both members of the centralspindlin complex, KIF23 and RACGAP1. As to expression, expressed in spleen, lung and heart with higher expression in testis. No expression in brain, liver and skeletal muscle. Elevated expression in actively cycling cells.

It is found in the midbody. The protein resides in the cytoplasm. The protein localises to the cytoskeleton. It localises to the spindle. In terms of biological role, may play a role in signaling pathways governing cellular proliferation, cell growth and differentiation. May be a component of a novel signaling pathway downstream of Shc. Acts as a positive regulator of FGF signaling in neural progenitor cells. The polypeptide is SHC SH2 domain-binding protein 1 (Shcbp1) (Mus musculus (Mouse)).